Here is a 261-residue protein sequence, read N- to C-terminus: Indole-3-glycerol phosphate synthase (261 aa).

It belongs to the TrpC family.

The catalysed reaction is 1-(2-carboxyphenylamino)-1-deoxy-D-ribulose 5-phosphate + H(+) = (1S,2R)-1-C-(indol-3-yl)glycerol 3-phosphate + CO2 + H2O. Its pathway is amino-acid biosynthesis; L-tryptophan biosynthesis; L-tryptophan from chorismate: step 4/5. The sequence is that of Indole-3-glycerol phosphate synthase from Paraburkholderia phytofirmans (strain DSM 17436 / LMG 22146 / PsJN) (Burkholderia phytofirmans).